The sequence spans 373 residues: C-C chemokine receptor type 2 (373 aa).

Residues 1-55 lie on the Extracellular side of the membrane; the sequence is MEDNNMLPQFIHGILSTSHSLFTRSIQELDEGATTPYDYDDGEPCHKTSVKQIGA. Residues 56–83 traverse the membrane as a helical segment; the sequence is WILPPLYSLVFIFGFVGNMLVIIILIGC. The Cytoplasmic segment spans residues 84 to 93; the sequence is KKLKSMTDIY. Residues 94–114 traverse the membrane as a helical segment; sequence LLNLAISDLLFLLTLPFWAHY. Over 115 to 127 the chain is Extracellular; the sequence is AANEWVFGNIMCK. An intrachain disulfide couples C126 to C203. Residues 128–149 traverse the membrane as a helical segment; that stretch reads VFTGLYHIGYFGGIFFIILLTI. At 150–166 the chain is on the cytoplasmic side; that stretch reads DRYLAIVHAVFALKART. Y152 carries the phosphotyrosine; by JAK2 modification. Residues 167-191 traverse the membrane as a helical segment; that stretch reads VTFGVITSVVTWVVAVFASLPGIIF. Topologically, residues 192–219 are extracellular; that stretch reads TKSKQDDHHYTCGPYFTQLWKNFQTIMR. A helical transmembrane segment spans residues 220 to 239; sequence NILSLILPLLVMVICYSGIL. The Cytoplasmic portion of the chain corresponds to 240 to 256; sequence HTLFRCRNEKKRHRAVR. Residues 257 to 281 form a helical membrane-spanning segment; sequence LIFAIMIVYFLFWTPYNIVLFLTTF. The Extracellular portion of the chain corresponds to 282–298; that stretch reads QESLGMSNCVIDKHLDQ. A helical membrane pass occupies residues 299–322; that stretch reads AMQVTETLGMTHCCINPVIYAFVG. Over 323-373 the chain is Cytoplasmic; sequence EKFRRYLSIFFRKHIAKRLCKQCPVFYRETADRVSSTFTPSTGEQEVSVGL.

Belongs to the G-protein coupled receptor 1 family. In terms of assembly, interacts with ARRB1. Interacts (via extracellular N-terminal region) with beta-defensin DEFB106A/DEFB106B; this interaction may preferentially require specific tyrosine sulfation on CCR2. Interacts with NUP85; the interaction is required for CCR2 clusters formation on the cell membrane and CCR2 signaling. In terms of processing, N-glycosylated. Post-translationally, sulfation increases the affinity for both monomeric and dimeric CCL2 with stronger binding to the monomeric form. Binding of sulfated CCR2 to CCL2 promotes conversion of CCL2 from dimer to monomer. Epressed in mature thymocytes. Detected in monocyte/macrophage cell lines, but not in nonhematopoietic cell lines.

The protein localises to the cell membrane. In terms of biological role, key functional receptor for CCL2 but can also bind CCL7 and CCL12 chemokines. Its binding with CCL2 on monocytes and macrophages mediates chemotaxis and migration induction through the activation of the PI3K cascade, the small G protein Rac and lamellipodium protrusion. Also acts as a receptor for the beta-defensin DEFB106A/DEFB106B. Regulates the expression of T-cell inflammatory cytokines and T-cell differentiation, promoting the differentiation of T-cells into T-helper 17 cells (Th17) during inflammation. Facilitates the export of mature thymocytes by enhancing directional movement of thymocytes to sphingosine-1-phosphate stimulation and up-regulation of S1P1R expression; signals through the JAK-STAT pathway to regulate FOXO1 activity leading to an increased expression of S1P1R. Plays an important role in mediating peripheral nerve injury-induced neuropathic pain. Increases NMDA-mediated synaptic transmission in both dopamine D1 and D2 receptor-containing neurons, which may be caused by MAPK/ERK-dependent phosphorylation of GRIN2B/NMDAR2B. Mediates the recruitment of macrophages and monocytes to the injury site following brain injury. The sequence is that of C-C chemokine receptor type 2 (Ccr2) from Mus musculus (Mouse).